We begin with the raw amino-acid sequence, 183 residues long: Guanylate kinase (183 aa).

The 179-residue stretch at 4 to 182 (GRVVVLTGPS…AITALEAAIF (179 aa)) folds into the Guanylate kinase-like domain. Residue 11–18 (GPSGVGKG) coordinates ATP.

The protein belongs to the guanylate kinase family.

The protein resides in the cytoplasm. The enzyme catalyses GMP + ATP = GDP + ADP. The catalysed reaction is dZMP + ATP = dZDP + ADP. It participates in purine metabolism. In terms of biological role, essential for recycling GMP and indirectly, cGMP. Its function is as follows. (Microbial infection) Catalyzes the phosphorylation of dZMP to dZDP, when the bacterium is infected by a phage that produces the substrate for the synthesis of dZTP (2- amino-2'-deoxyadenosine 5'-triphosphate), which is then used by the phage as a DNA polymerase substrate. This is Guanylate kinase from Synechococcus elongatus (strain ATCC 33912 / PCC 7942 / FACHB-805) (Anacystis nidulans R2).